The chain runs to 270 residues: tRNA (guanine-N(1)-)-methyltransferase (270 aa).

S-adenosyl-L-methionine is bound by residues glycine 113 and 133 to 138 (IGDYVL). The segment at 251–270 (APTEGTGLIHHRDVEGPGEG) is disordered. A compositionally biased stretch (basic and acidic residues) spans 260–270 (HHRDVEGPGEG).

Belongs to the RNA methyltransferase TrmD family. As to quaternary structure, homodimer.

The protein localises to the cytoplasm. The catalysed reaction is guanosine(37) in tRNA + S-adenosyl-L-methionine = N(1)-methylguanosine(37) in tRNA + S-adenosyl-L-homocysteine + H(+). In terms of biological role, specifically methylates guanosine-37 in various tRNAs. This Frankia casuarinae (strain DSM 45818 / CECT 9043 / HFP020203 / CcI3) protein is tRNA (guanine-N(1)-)-methyltransferase.